A 449-amino-acid polypeptide reads, in one-letter code: CCA-adding enzyme (449 aa).

Ser-53 and Lys-56 together coordinate ATP. Ser-53 and Lys-56 together coordinate CTP. Mg(2+)-binding residues include Asp-65, Asp-67, and Asp-119. His-142, Lys-161, and Tyr-170 together coordinate ATP. The CTP site is built by His-142, Lys-161, and Tyr-170.

The protein belongs to the tRNA nucleotidyltransferase/poly(A) polymerase family. Archaeal CCA-adding enzyme subfamily. In terms of assembly, homodimer. Requires Mg(2+) as cofactor.

The catalysed reaction is a tRNA precursor + 2 CTP + ATP = a tRNA with a 3' CCA end + 3 diphosphate. It catalyses the reaction a tRNA with a 3' CCA end + 2 CTP + ATP = a tRNA with a 3' CCACCA end + 3 diphosphate. Functionally, catalyzes the addition and repair of the essential 3'-terminal CCA sequence in tRNAs without using a nucleic acid template. Adds these three nucleotides in the order of C, C, and A to the tRNA nucleotide-73, using CTP and ATP as substrates and producing inorganic pyrophosphate. tRNA 3'-terminal CCA addition is required both for tRNA processing and repair. Also involved in tRNA surveillance by mediating tandem CCA addition to generate a CCACCA at the 3' terminus of unstable tRNAs. While stable tRNAs receive only 3'-terminal CCA, unstable tRNAs are marked with CCACCA and rapidly degraded. The sequence is that of CCA-adding enzyme from Pyrococcus horikoshii (strain ATCC 700860 / DSM 12428 / JCM 9974 / NBRC 100139 / OT-3).